The chain runs to 419 residues: UDP-N-acetylmuramoylalanine--D-glutamate ligase (419 aa).

109–115 (GSTGKTT) serves as a coordination point for ATP.

It belongs to the MurCDEF family.

The protein localises to the cytoplasm. It carries out the reaction UDP-N-acetyl-alpha-D-muramoyl-L-alanine + D-glutamate + ATP = UDP-N-acetyl-alpha-D-muramoyl-L-alanyl-D-glutamate + ADP + phosphate + H(+). It participates in cell wall biogenesis; peptidoglycan biosynthesis. Functionally, cell wall formation. Catalyzes the addition of glutamate to the nucleotide precursor UDP-N-acetylmuramoyl-L-alanine (UMA). In Chlamydia felis (strain Fe/C-56) (Chlamydophila felis), this protein is UDP-N-acetylmuramoylalanine--D-glutamate ligase.